The primary structure comprises 552 residues: Thermosome subunit beta (552 aa).

A disordered region spans residues 531-552; sequence AGKKGGSEPGGKKEKEEKSSED. Over residues 540–552 the composition is skewed to basic and acidic residues; it reads GGKKEKEEKSSED.

It belongs to the TCP-1 chaperonin family. As to quaternary structure, forms a heterooligomeric complex of two stacked nine-membered rings; one of alpha and the other of beta subunits. Sometimes called a 'rosettasome'.

The protein localises to the cytoplasm. The enzyme catalyses ATP + H2O = ADP + phosphate + H(+). Its function is as follows. Molecular chaperone; binds unfolded polypeptides in vitro, stimulates protein folding and has ATPase activity. One of the most abundant proteins in the cell at all temperatures. This Saccharolobus shibatae (strain ATCC 51178 / DSM 5389 / JCM 8931 / NBRC 15437 / B12) (Sulfolobus shibatae) protein is Thermosome subunit beta (thsB).